Here is a 463-residue protein sequence, read N- to C-terminus: SPARC-related modular calcium-binding protein 1 (463 aa).

Residues 1 to 25 form the signal peptide; that stretch reads MLPARVRLLTPHLLLVLVQLSPAGG. Residues 36 to 88 enclose the Kazal-like domain; it reads SDRDPPCNPHCPRTQPKPICASDGRSYESMCEYQRAKCRDPALAVVHRGRCKD. Intrachain disulfides connect C42–C73, C46–C66, C55–C86, C94–C117, C128–C135, and C137–C157. Residues 91–157 form the Thyroglobulin type-1 1 domain; that stretch reads QSKCRLERAQ…SSVQNKTPVC (67 aa). N-linked (GlcNAc...) asparagine glycosylation is present at N224. Residues 234–302 form the Thyroglobulin type-1 2 domain; the sequence is VHSCDQERQS…TSTRYVMPSC (69 aa). 3 disulfides stabilise this stretch: C237–C261, C272–C279, and C281–C302. EF-hand domains lie at 369–404 and 406–441; these read LEER…VKKK and KPKK…SKEG. Ca(2+)-binding residues include D382, N384, S386, D388, E393, D419, N421, D423, and E430. N-linked (GlcNAc...) asparagine glycosylation occurs at N384.

Glycosylated. Widely expressed in many tissues with a strongest signal in ovary.

It is found in the secreted. It localises to the extracellular space. The protein resides in the extracellular matrix. Its subcellular location is the basement membrane. Functionally, probable regulator of osteoblast differentiation. Plays essential roles in both eye and limb development. This Mus musculus (Mouse) protein is SPARC-related modular calcium-binding protein 1 (Smoc1).